A 281-amino-acid chain; its full sequence is Putative pyruvate, phosphate dikinase regulatory protein (281 aa).

150 to 157 provides a ligand contact to ADP; it reads GVSRTSKT.

Belongs to the pyruvate, phosphate/water dikinase regulatory protein family. PDRP subfamily.

The catalysed reaction is N(tele)-phospho-L-histidyl/L-threonyl-[pyruvate, phosphate dikinase] + ADP = N(tele)-phospho-L-histidyl/O-phospho-L-threonyl-[pyruvate, phosphate dikinase] + AMP + H(+). It catalyses the reaction N(tele)-phospho-L-histidyl/O-phospho-L-threonyl-[pyruvate, phosphate dikinase] + phosphate + H(+) = N(tele)-phospho-L-histidyl/L-threonyl-[pyruvate, phosphate dikinase] + diphosphate. Bifunctional serine/threonine kinase and phosphorylase involved in the regulation of the pyruvate, phosphate dikinase (PPDK) by catalyzing its phosphorylation/dephosphorylation. In Sorangium cellulosum (strain So ce56) (Polyangium cellulosum (strain So ce56)), this protein is Putative pyruvate, phosphate dikinase regulatory protein.